The following is a 214-amino-acid chain: Probable nicotinate-nucleotide adenylyltransferase (214 aa).

This sequence belongs to the NadD family.

The catalysed reaction is nicotinate beta-D-ribonucleotide + ATP + H(+) = deamido-NAD(+) + diphosphate. The protein operates within cofactor biosynthesis; NAD(+) biosynthesis; deamido-NAD(+) from nicotinate D-ribonucleotide: step 1/1. Its function is as follows. Catalyzes the reversible adenylation of nicotinate mononucleotide (NaMN) to nicotinic acid adenine dinucleotide (NaAD). In Buchnera aphidicola subsp. Acyrthosiphon pisum (strain Tuc7), this protein is Probable nicotinate-nucleotide adenylyltransferase.